The chain runs to 142 residues: Protein-export protein SecB (142 aa).

The protein belongs to the SecB family. In terms of assembly, homotetramer, a dimer of dimers. One homotetramer interacts with 1 SecA dimer.

Its subcellular location is the cytoplasm. Functionally, one of the proteins required for the normal export of preproteins out of the cell cytoplasm. It is a molecular chaperone that binds to a subset of precursor proteins, maintaining them in a translocation-competent state. It also specifically binds to its receptor SecA. The chain is Protein-export protein SecB from Buchnera aphidicola subsp. Acyrthosiphon pisum (strain 5A).